A 354-amino-acid chain; its full sequence is Uroporphyrinogen decarboxylase (354 aa).

Residues 27–31, aspartate 77, tyrosine 154, threonine 209, and histidine 327 each bind substrate; that span reads RQAGR.

This sequence belongs to the uroporphyrinogen decarboxylase family. Homodimer.

Its subcellular location is the cytoplasm. The catalysed reaction is uroporphyrinogen III + 4 H(+) = coproporphyrinogen III + 4 CO2. The protein operates within porphyrin-containing compound metabolism; protoporphyrin-IX biosynthesis; coproporphyrinogen-III from 5-aminolevulinate: step 4/4. Its function is as follows. Catalyzes the decarboxylation of four acetate groups of uroporphyrinogen-III to yield coproporphyrinogen-III. This Pseudomonas putida (strain ATCC 700007 / DSM 6899 / JCM 31910 / BCRC 17059 / LMG 24140 / F1) protein is Uroporphyrinogen decarboxylase.